Consider the following 437-residue polypeptide: Indole diterpene prenyltransferase anaPT (437 aa).

The segment at 1–28 (MSPLSMQTDSVQGTAENKSLETNGTSND) is disordered. L-tryptophan is bound by residues 102–103 (GF) and Glu111. 8 residues coordinate dimethylallyl diphosphate: Arg124, Lys208, Tyr210, Tyr282, Gln355, Tyr357, Tyr422, and Tyr426.

This sequence belongs to the tryptophan dimethylallyltransferase family.

The enzyme catalyses (R)-benzodiazepinedione + dimethylallyl diphosphate = (2R,3S,11R)-aszonalenin + diphosphate. The catalysed reaction is (S)-benzodiazepinedione + dimethylallyl diphosphate = (2R,3S,11S)-aszonalenin + diphosphate. It participates in alkaloid biosynthesis. Indole diterpene prenyltransferase; part of the gene cluster that mediates the biosynthesis of the prenylated pyrroloindoline diketopiperazine acetylaszonalenin. The first step in the pathway is the formation of (R)-benzodiazepinedione by condensation of tryptophan and anthranilic acid catalyzed by the non-ribosomal peptide synthetase anaPS. The prenyltransferase anaPT then converts (R)-benzodiazepinedione to aszonalenin in the presence of dimethylallyl diphosphate (DMAPP) via C3-prenylation. The last step in the biosynthesis of acetylaszonalenin via acetylation of aszonalenin at position N1 catalyzed by anaAT. The chain is Indole diterpene prenyltransferase anaPT from Neosartorya fischeri (strain ATCC 1020 / DSM 3700 / CBS 544.65 / FGSC A1164 / JCM 1740 / NRRL 181 / WB 181) (Aspergillus fischerianus).